The sequence spans 180 residues: Lipid droplet coating protein Cap20 (180 aa).

The protein belongs to the perilipin family. Interacts with class I hydrophobin Hydr1. Interacts also with the cAMP-dependent protein kinase catalytic subunit PkaC1.

It localises to the lipid droplet. Its function is as follows. Lipid droplet coating protein that regulates lipid metabolism, appressorial turgor pressure, and virulence. Mature appressoria with high turgor pressure are essential to penetrate the leaf surface. This chain is Lipid droplet coating protein Cap20, found in Colletotrichum siamense (Anthracnose fungus).